A 2298-amino-acid chain; its full sequence is Non-reducing polyketide synthase pgmA (2298 aa).

An N-terminal acylcarrier protein transacylase domain (SAT) region spans residues 8–333; sequence LFIFGDQTLD…IYNVLKQSPL (326 aa). The segment at 336–361 is disordered; it reads YLSSKPAQSRQPVSNEGAPEPGNGRQ. The span at 340 to 349 shows a compositional bias: polar residues; that stretch reads KPAQSRQPVS. In terms of domain architecture, Ketosynthase family 3 (KS3) spans 360–798; that stretch reads RQKLAIIGMS…GGNSALLVED (439 aa). Residues Cys532, His667, and His714 each act as for beta-ketoacyl synthase activity in the active site. The tract at residues 901–1193 is acyl/malonyl transferases; the sequence is VFAFTGQGAH…GMVKGVLGPQ (293 aa). Catalysis depends on Ser994, which acts as the For acyl/malonyl transferase activity. The N-terminal hotdog fold stretch occupies residues 1283–1415; it reads HRVVEETHDS…CVVRFRDRGL (133 aa). The PKS/mFAS DH domain maps to 1283–1589; sequence HRVVEETHDS…IQGVPRRVLK (307 aa). The segment at 1294–1586 is product template (PT) domainn; the sequence is KTRIVIEADI…QISIQGVPRR (293 aa). The Proton acceptor; for dehydratase activity role is filled by His1315. The interval 1438 to 1589 is C-terminal hotdog fold; the sequence is VTGETARFNR…IQGVPRRVLK (152 aa). Asp1502 serves as the catalytic Proton donor; for dehydratase activity. The interval 1619 to 1642 is disordered; that stretch reads YPVANGHAQATPTSGPVNGEPRPS. Residues 1641–1716 enclose the Carrier 1 domain; that stretch reads PSRFPRALEI…SLRALLSEPE (76 aa). Residue Ser1675 is modified to O-(pantetheine 4'-phosphoryl)serine. The interval 1716–1762 is disordered; sequence ERSTNGMPAASAKDTSRFDEIPPMNGHKTNGHVMNGHSNGSSNGLPD. Residues 1751-1760 show a composition bias toward polar residues; it reads GHSNGSSNGL. A Carrier 2 domain is found at 1765–1840; it reads KVDFQRVLQI…DLKRYLFPQD (76 aa). At Ser1799 the chain carries O-(pantetheine 4'-phosphoryl)serine. The interval 1927–2178 is reductase (R) domain; the sequence is VTGASGSLGG…YWTPVEEVAG (252 aa).

Its pathway is pigment biosynthesis. The protein operates within secondary metabolite biosynthesis. In terms of biological role, non-reducing polyketide synthase; part of the gene cluster that mediates the biosynthesis of pleosporalin A, ascomycone A, as well as a third cryptic naphthoquinone derived pigment, all responsible for the coloration of conidia. The non-reducing polyketide synthase pgmA is responsible for the condensation of seven acetyl-CoA units to produce the cyclized heptaketide 3-acetonyl-1,6,8-trihydroxy-2-naphthaldehyde. The pathway begins with the biosynthesis of the cyclized heptaketide 3-acetonyl-1,6,8-trihydroxy-2-naphthaldehyde by the NR-PKS pgmA. The C-6 hydroxyl group is further methylated by the O-methyltransferase pgmB to yield fusarubinaldehyde which is in turn oxidized by the cytochrome P450 monooxygenase pgmC at C-9. The C-1 hydroxyl group is then methylated spontaneously. Although pgmE, pgmD and pgmH are essential for the production of pleosporalin A, it is not the case for the 2 other final products and it remains difficult to assign a specific function to each enzyme. PgmF and pgmG seem not to be involved in pigment biosynthesis although they were regulated by the cluster-specific transcription factor pgmR. This chain is Non-reducing polyketide synthase pgmA, found in Aspergillus terreus (strain NIH 2624 / FGSC A1156).